We begin with the raw amino-acid sequence, 258 residues long: Short-chain dehydrogenase chyC (258 aa).

NADP(+) contacts are provided by Arg-37, Asp-55, Asn-81, Tyr-154, Lys-158, Val-185, and Thr-187. The active-site Proton donor is Tyr-154. Residue Lys-158 is the Lowers pKa of active site Tyr of the active site.

Belongs to the short-chain dehydrogenases/reductases (SDR) family.

Its function is as follows. Short-chain dehydrogenase; part of the gene cluster that mediates the biosynthesis of the yellow pigment chrysogine. the NRPS chyA mediates the condensation of anthranilic acid and alanine into the intermediate 2-(2-aminopropanamido)benzoic acid. The remainder of the pathway is highly branched yielding at least 13 chrysogine-related compounds. The malonyl transferase chyE converts 2-(2-aminopropanamido)benzoic acid and 2-(2-aminopropanamido)benzamidine into 2-(2-(2-carboxyacetamido)propanamido)benzoic acid and 3-((1-((2-carbamoylphenyl)amino)-1-oxopropan-2-yl)amino)-3-oxopropanoic acid, respectively. ChyD is an amidase, being responsible for the amidation of the carboxylic acid moiety of 2-(2-aminopropanamido)benzoic acid, 2-(2-(2-carboxyacetamido)propanamido)benzoic acid and 2-(2-((4-amino-1-carboxy-4-oxobutyl)amino)propanamido)benzoic acid. ChyC is involved in the same reactions as ChyD, but plays a more minor role in the amidation reactions compared to chyD. The oxidoreductases chyH and chyM are involved in oxidation reactions that form N-pyruvoylanthranilamide from 2-(2-aminopropanamido)benzamidine and (1-((2-carbamoylphenyl)amino)-1-oxopropan-2-yl)glutamine, respectively. N-pyruvoylanthranilamide is further converted via two further branches in the pathway, yielding chrysogine and additional chrysogine-related coumpounds. Chrysogine is likely formed by a spontaneous ring closure from N-pyruvoylanthranilamide. In Penicillium rubens (strain ATCC 28089 / DSM 1075 / NRRL 1951 / Wisconsin 54-1255) (Penicillium chrysogenum), this protein is Short-chain dehydrogenase chyC.